A 239-amino-acid chain; its full sequence is LexA repressor (239 aa).

A disordered region spans residues 1-40; the sequence is MTEAATGPEGADPSRAARSLPGRPPGIRADSSGLTDRQRR. The segment at residues 58–78 is a DNA-binding region (H-T-H motif); sequence MREIGQAVGLSSTSSVAHQLM. Residues 89–100 are compositionally biased toward basic and acidic residues; the sequence is DPHRPRAYEVRG. Residues 89 to 116 are disordered; it reads DPHRPRAYEVRGSDQPSAQPADTSGKPA. Residues S163 and K200 each act as for autocatalytic cleavage activity in the active site.

It belongs to the peptidase S24 family. Homodimer.

The enzyme catalyses Hydrolysis of Ala-|-Gly bond in repressor LexA.. Its function is as follows. Represses a number of genes involved in the response to DNA damage (SOS response), including recA and lexA. In the presence of single-stranded DNA, RecA interacts with LexA causing an autocatalytic cleavage which disrupts the DNA-binding part of LexA, leading to derepression of the SOS regulon and eventually DNA repair. This is LexA repressor from Streptomyces clavuligerus.